Here is a 128-residue protein sequence, read N- to C-terminus: L-ectoine synthase (128 aa).

This sequence belongs to the ectoine synthase family.

It catalyses the reaction (2S)-4-acetamido-2-aminobutanoate = L-ectoine + H2O. The protein operates within amine and polyamine biosynthesis; ectoine biosynthesis; L-ectoine from L-aspartate 4-semialdehyde: step 3/3. Functionally, catalyzes the circularization of gamma-N-acetyl-alpha,gamma-diaminobutyric acid (ADABA) to ectoine (1,4,5,6-tetrahydro-2-methyl-4-pyrimidine carboxylic acid), which is an excellent osmoprotectant. The polypeptide is L-ectoine synthase (Vibrio campbellii (strain ATCC BAA-1116)).